The sequence spans 406 residues: Formate-dependent phosphoribosylglycinamide formyltransferase (406 aa).

N(1)-(5-phospho-beta-D-ribosyl)glycinamide is bound by residues 28 to 29 and Glu-88; that span reads EL. Residues Arg-121, Lys-162, 167 to 172, 202 to 205, and Glu-210 each bind ATP; these read SSGKGQ and EGFI. The 195-residue stretch at 126 to 320 folds into the ATP-grasp domain; the sequence is RLAAEELGCA…EFELHAKAIL (195 aa). Residues Glu-279 and Glu-291 each contribute to the Mg(2+) site. Residues Asp-298, Lys-367, and 374-375 each bind N(1)-(5-phospho-beta-D-ribosyl)glycinamide; that span reads RR.

The protein belongs to the PurK/PurT family. Homodimer.

It catalyses the reaction N(1)-(5-phospho-beta-D-ribosyl)glycinamide + formate + ATP = N(2)-formyl-N(1)-(5-phospho-beta-D-ribosyl)glycinamide + ADP + phosphate + H(+). Its pathway is purine metabolism; IMP biosynthesis via de novo pathway; N(2)-formyl-N(1)-(5-phospho-D-ribosyl)glycinamide from N(1)-(5-phospho-D-ribosyl)glycinamide (formate route): step 1/1. Functionally, involved in the de novo purine biosynthesis. Catalyzes the transfer of formate to 5-phospho-ribosyl-glycinamide (GAR), producing 5-phospho-ribosyl-N-formylglycinamide (FGAR). Formate is provided by PurU via hydrolysis of 10-formyl-tetrahydrofolate. The protein is Formate-dependent phosphoribosylglycinamide formyltransferase of Janthinobacterium sp. (strain Marseille) (Minibacterium massiliensis).